The following is a 118-amino-acid chain: Non-specific lipid-transfer protein 3 (118 aa).

The N-terminal stretch at 1–25 (MARAAATQLVLVAMVAAMLLVATDA) is a signal peptide. Intrachain disulfides connect Cys29-Cys77, Cys39-Cys54, Cys55-Cys100, and Cys75-Cys114.

This sequence belongs to the plant LTP family.

Its function is as follows. Plant non-specific lipid-transfer proteins transfer phospholipids as well as galactolipids across membranes. May play a role in wax or cutin deposition in the cell walls of expanding epidermal cells and certain secretory tissues. The chain is Non-specific lipid-transfer protein 3 (LTP3) from Hordeum vulgare (Barley).